Reading from the N-terminus, the 181-residue chain is MAILKLEDGTIYTQLHDISRELSSLNIQLNHWPVGDNLETHNLLEKDVLSDDQKEEFLQSVDHYFEELKETAGYQSRDLLAIHPEIPNLDAILSKFDKCHTHADDEARYIVAGICIFGFVRPDDSQVELTLQPQEYINIPANTEHWFYLTPEKRVKAVRYFSSTEGWTPHYTSTEIHFKKS.

Fe(2+)-binding residues include histidine 100, histidine 102, glutamate 106, and histidine 145. The Ni(2+) site is built by histidine 100, histidine 102, glutamate 106, and histidine 145.

It belongs to the acireductone dioxygenase (ARD) family. In terms of assembly, monomer. It depends on Fe(2+) as a cofactor. Ni(2+) serves as cofactor.

It carries out the reaction 1,2-dihydroxy-5-(methylsulfanyl)pent-1-en-3-one + O2 = 3-(methylsulfanyl)propanoate + CO + formate + 2 H(+). The catalysed reaction is 1,2-dihydroxy-5-(methylsulfanyl)pent-1-en-3-one + O2 = 4-methylsulfanyl-2-oxobutanoate + formate + 2 H(+). The protein operates within amino-acid biosynthesis; L-methionine biosynthesis via salvage pathway; L-methionine from S-methyl-5-thio-alpha-D-ribose 1-phosphate: step 5/6. Its function is as follows. Catalyzes 2 different reactions between oxygen and the acireductone 1,2-dihydroxy-3-keto-5-methylthiopentene (DHK-MTPene) depending upon the metal bound in the active site. Fe-containing acireductone dioxygenase (Fe-ARD) produces formate and 2-keto-4-methylthiobutyrate (KMTB), the alpha-ketoacid precursor of methionine in the methionine recycle pathway. Ni-containing acireductone dioxygenase (Ni-ARD) produces methylthiopropionate, carbon monoxide and formate, and does not lie on the methionine recycle pathway. The sequence is that of Acireductone dioxygenase from Trichodesmium erythraeum (strain IMS101).